The sequence spans 1035 residues: Beta-galactosidase (1035 aa).

Residues Asn-109 and Asp-208 each contribute to the substrate site. Asp-208 contributes to the Na(+) binding site. Mg(2+) is bound by residues Glu-424, His-426, and Glu-469. Substrate is bound by residues Glu-469 and 545 to 548; that span reads EYAH. Catalysis depends on Glu-469, which acts as the Proton donor. Glu-545 acts as the Nucleophile in catalysis. Asn-605 is a Mg(2+) binding site. Positions 609 and 612 each coordinate Na(+). Residues Asn-612 and Trp-1011 each contribute to the substrate site.

It belongs to the glycosyl hydrolase 2 family. Homotetramer. Requires Mg(2+) as cofactor. Na(+) is required as a cofactor.

It carries out the reaction Hydrolysis of terminal non-reducing beta-D-galactose residues in beta-D-galactosides.. In Klebsiella pneumoniae (strain 342), this protein is Beta-galactosidase.